A 543-amino-acid chain; its full sequence is Chaperonin GroEL 4 (543 aa).

Residues 29–32 (TLGP), 86–90 (DGTTT), G411, 476–478 (DAA), and D492 each bind ATP.

Belongs to the chaperonin (HSP60) family. In terms of assembly, forms a cylinder of 14 subunits composed of two heptameric rings stacked back-to-back. Interacts with the co-chaperonin GroES.

It localises to the cytoplasm. It carries out the reaction ATP + H2O + a folded polypeptide = ADP + phosphate + an unfolded polypeptide.. In terms of biological role, together with its co-chaperonin GroES, plays an essential role in assisting protein folding. The GroEL-GroES system forms a nano-cage that allows encapsulation of the non-native substrate proteins and provides a physical environment optimized to promote and accelerate protein folding. This Bradyrhizobium diazoefficiens (strain JCM 10833 / BCRC 13528 / IAM 13628 / NBRC 14792 / USDA 110) protein is Chaperonin GroEL 4.